A 628-amino-acid polypeptide reads, in one-letter code: Keratin, type II cytoskeletal 3 (628 aa).

The tract at residues 1–21 is disordered; the sequence is MSRQASKTSGGGSQGFSGRSA. The head stretch occupies residues 1–197; it reads MSRQASKTSG…DPQIGQVKAQ (197 aa). A phosphoserine mark is found at serine 13 and serine 56. The tract at residues 198–233 is coil 1A; the sequence is EREQIKTLNNKFASFIDKVRFLEQQNKVLETKWNLL. In terms of domain architecture, IF rod spans 198–513; sequence EREQIKTLNN…KLLEGEEYRM (316 aa). The segment at 234-254 is linker 1; that stretch reads QQQGTSSISGTNNLEPLFENH. The segment at 255–346 is coil 1B; it reads INYLRSYLDN…TLYDAELSQM (92 aa). Lysine 296 is modified (N6,N6-dimethyllysine). A linker 12 region spans residues 347–370; that stretch reads QSHISDTSVVLSMDNNRSLDLDSI. Position 364 is a phosphoserine (serine 364). A coil 2 region spans residues 371–509; it reads IAEVRAQYED…ATYRKLLEGE (139 aa). Residues 510–628 are tail; that stretch reads EYRMSGECPS…SSQSSQRYSR (119 aa). The tract at residues 605–628 is disordered; sequence SSASNRGGSIKFSQSSQSSQRYSR. Residues 617 to 628 show a composition bias toward low complexity; it reads SQSSQSSQRYSR.

It belongs to the intermediate filament family. As to quaternary structure, heterotetramer of two type I and two type II keratins. Keratin-3 associates with keratin-12. In terms of tissue distribution, cornea specific.

This Homo sapiens (Human) protein is Keratin, type II cytoskeletal 3 (KRT3).